Reading from the N-terminus, the 536-residue chain is Cytochrome P450 monooxygenase pbrC (536 aa).

A helical membrane pass occupies residues 20–39; the sequence is VMLPALVGFAFLIYQAFFAI. Residue Cys-479 participates in heme binding.

It belongs to the cytochrome P450 family. It depends on heme as a cofactor.

It localises to the membrane. It participates in secondary metabolite biosynthesis; terpenoid biosynthesis. Its function is as follows. Cytochrome P450 monooxygenase; part of the gene cluster that mediates the biosynthesis of the sesquiterpenoid aspterric acid (AA), an inhibitor of dihydroxy-acid dehydratase (DHAD) effective as an herbicide. PbrC catalyzes the third and last step within the pathway and converts the alpha-epoxy carboxylate intermediate produced by the cytochrome P450 monooxygenase pbrB from (-)daucane into the tricyclic aspterric acid. The chain is Cytochrome P450 monooxygenase pbrC from Penicillium brasilianum.